A 298-amino-acid polypeptide reads, in one-letter code: Ribosomal protein L11 methyltransferase (298 aa).

Residues Thr-150, Gly-171, Asp-193, and Asn-232 each coordinate S-adenosyl-L-methionine.

The protein belongs to the methyltransferase superfamily. PrmA family.

It localises to the cytoplasm. It catalyses the reaction L-lysyl-[protein] + 3 S-adenosyl-L-methionine = N(6),N(6),N(6)-trimethyl-L-lysyl-[protein] + 3 S-adenosyl-L-homocysteine + 3 H(+). Functionally, methylates ribosomal protein L11. The sequence is that of Ribosomal protein L11 methyltransferase from Chromobacterium violaceum (strain ATCC 12472 / DSM 30191 / JCM 1249 / CCUG 213 / NBRC 12614 / NCIMB 9131 / NCTC 9757 / MK).